The following is a 214-amino-acid chain: Pyrrolidone-carboxylate peptidase (214 aa).

Residues E78, C141, and H165 contribute to the active site.

It belongs to the peptidase C15 family. Homotetramer.

It localises to the cytoplasm. It catalyses the reaction Release of an N-terminal pyroglutamyl group from a polypeptide, the second amino acid generally not being Pro.. Its function is as follows. Removes 5-oxoproline from various penultimate amino acid residues except L-proline. The protein is Pyrrolidone-carboxylate peptidase of Streptococcus pneumoniae serotype 2 (strain D39 / NCTC 7466).